The sequence spans 176 residues: Glutathione-regulated potassium-efflux system ancillary protein KefF (176 aa).

FMN-binding positions include His8, 14-17 (SHAN), 65-68 (MQWY), and 105-108 (TTGG).

This sequence belongs to the NAD(P)H dehydrogenase (quinone) family. KefF subfamily. Homodimer. Interacts with KefC. It depends on FMN as a cofactor.

The protein localises to the cell inner membrane. The enzyme catalyses a quinone + NADH + H(+) = a quinol + NAD(+). The catalysed reaction is a quinone + NADPH + H(+) = a quinol + NADP(+). In terms of biological role, regulatory subunit of a potassium efflux system that confers protection against electrophiles. Required for full activity of KefC. Shows redox enzymatic activity, but this enzymatic activity is not required for activation of KefC. The sequence is that of Glutathione-regulated potassium-efflux system ancillary protein KefF from Salmonella gallinarum (strain 287/91 / NCTC 13346).